A 367-amino-acid polypeptide reads, in one-letter code: Histidinol-phosphate aminotransferase (367 aa).

At Lys225 the chain carries N6-(pyridoxal phosphate)lysine.

Belongs to the class-II pyridoxal-phosphate-dependent aminotransferase family. Histidinol-phosphate aminotransferase subfamily. In terms of assembly, homodimer. It depends on pyridoxal 5'-phosphate as a cofactor.

It catalyses the reaction L-histidinol phosphate + 2-oxoglutarate = 3-(imidazol-4-yl)-2-oxopropyl phosphate + L-glutamate. It functions in the pathway amino-acid biosynthesis; L-histidine biosynthesis; L-histidine from 5-phospho-alpha-D-ribose 1-diphosphate: step 7/9. This chain is Histidinol-phosphate aminotransferase, found in Hyphomonas neptunium (strain ATCC 15444).